The chain runs to 620 residues: 1-deoxy-D-xylulose-5-phosphate synthase (620 aa).

Thiamine diphosphate contacts are provided by residues His80 and 121-123 (GHS). Asp152 provides a ligand contact to Mg(2+). Residues 153–154 (GA), Asn181, Tyr288, and Glu370 each bind thiamine diphosphate. Asn181 lines the Mg(2+) pocket.

This sequence belongs to the transketolase family. DXPS subfamily. In terms of assembly, homodimer. It depends on Mg(2+) as a cofactor. The cofactor is thiamine diphosphate.

It catalyses the reaction D-glyceraldehyde 3-phosphate + pyruvate + H(+) = 1-deoxy-D-xylulose 5-phosphate + CO2. The protein operates within metabolic intermediate biosynthesis; 1-deoxy-D-xylulose 5-phosphate biosynthesis; 1-deoxy-D-xylulose 5-phosphate from D-glyceraldehyde 3-phosphate and pyruvate: step 1/1. Its function is as follows. Catalyzes the acyloin condensation reaction between C atoms 2 and 3 of pyruvate and glyceraldehyde 3-phosphate to yield 1-deoxy-D-xylulose-5-phosphate (DXP). The sequence is that of 1-deoxy-D-xylulose-5-phosphate synthase from Escherichia coli (strain 55989 / EAEC).